A 1038-amino-acid polypeptide reads, in one-letter code: Eukaryotic translation initiation factor 3 subunit A (1038 aa).

Residues L92–A121 adopt a coiled-coil conformation. One can recognise a PCI domain in the interval M339–F523. Residues I611–A899 adopt a coiled-coil conformation. 2 stretches are compositionally biased toward basic and acidic residues: residues A621–R632 and R800–R901. 2 disordered regions span residues A621–Q641 and R800–Q1038. Composition is skewed to low complexity over residues K943–E952 and G976–S993. The span at D1002–S1019 shows a compositional bias: polar residues.

This sequence belongs to the eIF-3 subunit A family. In terms of assembly, component of the eukaryotic translation initiation factor 3 (eIF-3) complex.

The protein resides in the cytoplasm. Functionally, RNA-binding component of the eukaryotic translation initiation factor 3 (eIF-3) complex, which is involved in protein synthesis of a specialized repertoire of mRNAs and, together with other initiation factors, stimulates binding of mRNA and methionyl-tRNAi to the 40S ribosome. The eIF-3 complex specifically targets and initiates translation of a subset of mRNAs involved in cell proliferation. In Aspergillus oryzae (strain ATCC 42149 / RIB 40) (Yellow koji mold), this protein is Eukaryotic translation initiation factor 3 subunit A (tif32).